Here is a 403-residue protein sequence, read N- to C-terminus: Keratin, type I cytoskeletal 19 (403 aa).

Residues 1–82 (MTSYSYRQSS…TVTDGLLGGN (82 aa)) form a head region. At arginine 7 the chain carries Omega-N-methylarginine. A Phosphoserine modification is found at serine 14. Arginine 24 is subject to Asymmetric dimethylarginine; alternate. Residue arginine 24 is modified to Omega-N-methylarginine; alternate. At serine 27 the chain carries Phosphoserine. An Omega-N-methylarginine modification is found at arginine 32. Phosphoserine occurs at positions 35 and 40. Arginine 43 and arginine 51 each carry omega-N-methylarginine. 2 positions are modified to phosphoserine: serine 57 and serine 67. Residues 83-118 (EKITMQNLNDRLASYLDKVRALEQANGELEVKIRDW) are coil 1A. Positions 83–394 (EKITMQNLND…SLLEGQEAHY (312 aa)) constitute an IF rod domain. Residues 119–136 (YQKQGPGPFRDYSQYFKT) are linker 1. The segment at 137 to 228 (IEDLRDKILG…KNHEEEISAL (92 aa)) is coil 1B. The segment at 229–251 (RSQVGGQVSVEVDSTPGIDLAKI) is linker 12. The segment at 247 to 393 (DLAKILSEMR…RSLLEGQEAH (147 aa)) is necessary for interaction with PNN. The tract at residues 252 to 390 (LSEMRSQYEA…ATYRSLLEGQ (139 aa)) is coil 2. Phosphothreonine is present on threonine 326. The interval 391–403 (EAHYNSLSIAKAL) is rod-like helical tail. At tyrosine 394 the chain carries Phosphotyrosine. Serine 398 is modified (phosphoserine).

Belongs to the intermediate filament family. Heterotetramer of two type I and two type II keratins. Interacts with PNN. Interacts with the actin-binding domain of DMD. As to expression, expressed in brain, heart, skin and in costameres of myoplasm at the sarcolemmal membrane in skeletal and cardiac muscle fibers. Undifferentiated gonads and somatic cells of ovarian cords throughout the fetal ovary development.

In terms of biological role, involved in the organization of myofibers. Together with KRT8, helps to link the contractile apparatus to dystrophin at the costameres of striated muscle. The protein is Keratin, type I cytoskeletal 19 (Krt19) of Rattus norvegicus (Rat).